Consider the following 407-residue polypeptide: Probable tRNA sulfurtransferase (407 aa).

A THUMP domain is found at 61-165 (EEMCNRLKKV…LDAIYMYDQV (105 aa)). ATP is bound by residues 183 to 184 (ML), 208 to 209 (HF), Arg-265, Gly-287, and Gln-296.

It belongs to the ThiI family.

Its subcellular location is the cytoplasm. It catalyses the reaction [ThiI sulfur-carrier protein]-S-sulfanyl-L-cysteine + a uridine in tRNA + 2 reduced [2Fe-2S]-[ferredoxin] + ATP + H(+) = [ThiI sulfur-carrier protein]-L-cysteine + a 4-thiouridine in tRNA + 2 oxidized [2Fe-2S]-[ferredoxin] + AMP + diphosphate. It carries out the reaction [ThiS sulfur-carrier protein]-C-terminal Gly-Gly-AMP + S-sulfanyl-L-cysteinyl-[cysteine desulfurase] + AH2 = [ThiS sulfur-carrier protein]-C-terminal-Gly-aminoethanethioate + L-cysteinyl-[cysteine desulfurase] + A + AMP + 2 H(+). Its pathway is cofactor biosynthesis; thiamine diphosphate biosynthesis. Its function is as follows. Catalyzes the ATP-dependent transfer of a sulfur to tRNA to produce 4-thiouridine in position 8 of tRNAs, which functions as a near-UV photosensor. Also catalyzes the transfer of sulfur to the sulfur carrier protein ThiS, forming ThiS-thiocarboxylate. This is a step in the synthesis of thiazole, in the thiamine biosynthesis pathway. The sulfur is donated as persulfide by IscS. The protein is Probable tRNA sulfurtransferase of Staphylococcus saprophyticus subsp. saprophyticus (strain ATCC 15305 / DSM 20229 / NCIMB 8711 / NCTC 7292 / S-41).